The following is a 96-amino-acid chain: Cytochrome c2 iso-2 (96 aa).

Residues cysteine 10, cysteine 13, histidine 14, and methionine 75 each coordinate heme c.

This sequence belongs to the cytochrome c family. In terms of processing, binds 1 heme c group covalently per subunit.

Cytochrome c2 is found mainly in purple, non-sulfur, photosynthetic bacteria where it functions as the electron donor to the oxidized bacteriochlorophyll in the photophosphorylation pathway. However, it may also have a role in the respiratory chain and is found in some non-photosynthetic bacteria. The sequence is that of Cytochrome c2 iso-2 from Magnetospirillum fulvum (Rhodospirillum fulvum).